A 327-amino-acid polypeptide reads, in one-letter code: Metaxin-1 homolog (327 aa).

A helical transmembrane segment spans residues 281-301 (IVAGVGAVLAMGAFAAWRGIY).

This sequence belongs to the metaxin family. As to quaternary structure, associates with the mitochondrial contact site and cristae organizing system (MICOS) complex (also known as MINOS or MitOS complex).

It localises to the mitochondrion outer membrane. Functionally, involved in transport of proteins into the mitochondrion. Essential for embryonic development. The polypeptide is Metaxin-1 homolog (Drosophila melanogaster (Fruit fly)).